The sequence spans 499 residues: Lysine--tRNA ligase (499 aa).

Mg(2+) is bound by residues Glu-409 and Glu-416.

This sequence belongs to the class-II aminoacyl-tRNA synthetase family. In terms of assembly, homodimer. Mg(2+) is required as a cofactor.

The protein localises to the cytoplasm. The enzyme catalyses tRNA(Lys) + L-lysine + ATP = L-lysyl-tRNA(Lys) + AMP + diphosphate. This Thioalkalivibrio sulfidiphilus (strain HL-EbGR7) protein is Lysine--tRNA ligase.